The chain runs to 90 residues: Probable Fe(2+)-trafficking protein (90 aa).

Belongs to the Fe(2+)-trafficking protein family.

Its function is as follows. Could be a mediator in iron transactions between iron acquisition and iron-requiring processes, such as synthesis and/or repair of Fe-S clusters in biosynthetic enzymes. This chain is Probable Fe(2+)-trafficking protein, found in Nitrosomonas europaea (strain ATCC 19718 / CIP 103999 / KCTC 2705 / NBRC 14298).